A 377-amino-acid polypeptide reads, in one-letter code: Glutamate 5-kinase (377 aa).

Lysine 18 is an ATP binding site. Substrate contacts are provided by serine 59, aspartate 146, and asparagine 158. ATP is bound by residues 178–179 (SD) and 222–228 (TGGMATK). The region spanning 286–363 (QGWVTVDAGA…DAIEAELGFT (78 aa)) is the PUA domain.

This sequence belongs to the glutamate 5-kinase family.

The protein resides in the cytoplasm. The catalysed reaction is L-glutamate + ATP = L-glutamyl 5-phosphate + ADP. It participates in amino-acid biosynthesis; L-proline biosynthesis; L-glutamate 5-semialdehyde from L-glutamate: step 1/2. Its function is as follows. Catalyzes the transfer of a phosphate group to glutamate to form L-glutamate 5-phosphate. The polypeptide is Glutamate 5-kinase (Caulobacter vibrioides (strain ATCC 19089 / CIP 103742 / CB 15) (Caulobacter crescentus)).